The chain runs to 181 residues: ADP-ribosylation factor 1 (181 aa).

Residue G2 is the site of N-myristoyl glycine attachment. Residues 24 to 31, 67 to 71, and 126 to 129 each bind GTP; these read GLDAAGKT, DVGGQ, and NKQD.

Belongs to the small GTPase superfamily. Arf family. As to expression, seedling shoots.

It is found in the golgi apparatus. The catalysed reaction is GTP + H2O = GDP + phosphate + H(+). GTP-binding protein involved in protein trafficking; may modulate vesicle budding and uncoating within the Golgi apparatus. This Oryza sativa subsp. japonica (Rice) protein is ADP-ribosylation factor 1.